A 245-amino-acid polypeptide reads, in one-letter code: Probable transcriptional regulatory protein NSE_0641 (245 aa).

The tract at residues Met1–Ala22 is disordered.

This sequence belongs to the TACO1 family.

It is found in the cytoplasm. This is Probable transcriptional regulatory protein NSE_0641 from Neorickettsia sennetsu (strain ATCC VR-367 / Miyayama) (Ehrlichia sennetsu).